Here is a 149-residue protein sequence, read N- to C-terminus: Calmodulin (149 aa).

N-acetylalanine is present on Ala2. 4 consecutive EF-hand domains span residues 8–43 (EQIS…LGQN), 44–79 (PTEA…KLKD), 81–116 (DTEE…LGEK), and 117–149 (LTNE…MIAK). Ca(2+) contacts are provided by Asp21, Asp23, Asp25, Thr27, Glu32, Asp57, Asp59, Asn61, Thr63, Glu68, Asp94, Asp96, Asp98, Tyr100, Glu105, Asp130, Asp132, Asp134, Gln136, and Glu141.

The protein belongs to the calmodulin family.

Its subcellular location is the cytoplasm. Calmodulin mediates the control of a large number of enzymes, ion channels and other proteins by Ca(2+). Among the enzymes to be stimulated by the calmodulin-Ca(2+) complex are a number of protein kinases and phosphatases. In Plasmodium falciparum (isolate 3D7), this protein is Calmodulin.